A 767-amino-acid chain; its full sequence is Probable ubiquitin carboxyl-terminal hydrolase creB (767 aa).

Residues 49 to 462 (YGMENYGNTC…CAYVLFYQET (414 aa)) enclose the USP domain. Cys58 serves as the catalytic Nucleophile. Disordered regions lie at residues 107 to 140 (EAEAQAEKQKAANAQRPGMPPNPQQKPEDKDSPE) and 232 to 263 (ASKQPPIEKSLPAPETADSVDQSSSTGSKTPN). Residues 250 to 263 (SVDQSSSTGSKTPN) show a composition bias toward polar residues. Catalysis depends on His413, which acts as the Proton acceptor. The tract at residues 490–767 (LKQNGFPQSP…LRKKSFSILS (278 aa)) is disordered. 2 stretches are compositionally biased toward low complexity: residues 540–554 (ESAPFSPLSPLSPLS) and 564–573 (ERVTTVATPP). A coiled-coil region spans residues 574–641 (KNDALAKKER…ASKAEEDRRL (68 aa)). Over residues 577-650 (ALAKKERARE…LSHENGKEKQ (74 aa)) the composition is skewed to basic and acidic residues. The span at 656 to 667 (RLKRGSKSLSHR) shows a compositional bias: basic residues. The span at 690 to 700 (STLSQTGPTSE) shows a compositional bias: polar residues. Residues 701–713 (QQQQQQQQQQQQQ) show a composition bias toward low complexity. The segment covering 731–749 (TIREDEQVNHKDSKHERTG) has biased composition (basic and acidic residues). Positions 750 to 767 (HGKWRSFSLRKKSFSILS) are enriched in basic residues.

This sequence belongs to the peptidase C19 family. Interacts with creA, creC and qutD.

It carries out the reaction Thiol-dependent hydrolysis of ester, thioester, amide, peptide and isopeptide bonds formed by the C-terminal Gly of ubiquitin (a 76-residue protein attached to proteins as an intracellular targeting signal).. Functionally, ubiquitin thioesterase component of the regulatory network controlling carbon source utilization through ubiquitination and deubiquitination involving creA, creB, creC, creD and acrB. Deubiquitinates the creA catabolic repressor and the quinate permease qutD. Also plays a role in response to carbon starvation and the control of extracellular proteases activity. The sequence is that of Probable ubiquitin carboxyl-terminal hydrolase creB (creB) from Aspergillus fumigatus (strain CBS 144.89 / FGSC A1163 / CEA10) (Neosartorya fumigata).